The following is a 334-amino-acid chain: MSTADRTAPVTVTVTGAAGQIAYGLLFRIASGAMLGPHTPIRLRLLEIPAAVASLEGVAMELEDGAFPLLDAIDISDDPWTGFAGANVALLVGARPRTAGMERADLLAANGPIFTDQGQAINAVAADDVKVLVVGNPANTNAFIAMSNAPDVPAERFTAMTRLDHNRAIAQLAKKTGAPATEIHRIAVWGNHSATQYPDLTHATVAGRPARELVDEQWLREDFIPTVQQRGTAIIQARGASSAASAASAAIDHIHDWVLGTPAGEWTSMAVPSDGSYGVPDGLISSFPVTCADGAYRIVEGLEVDAFSRERIDASVAELTAEREAVVELGFAKG.

An NAD(+)-binding site is contributed by 16 to 22; that stretch reads GAAGQIA. Residues Arg-97 and Arg-103 each contribute to the substrate site. Residues Asn-110, Gln-117, and 134 to 136 contribute to the NAD(+) site; that span reads VGN. Substrate-binding residues include Asn-136 and Arg-167. The active-site Proton acceptor is the His-192.

This sequence belongs to the LDH/MDH superfamily. MDH type 2 family.

It carries out the reaction (S)-malate + NAD(+) = oxaloacetate + NADH + H(+). Catalyzes the reversible oxidation of malate to oxaloacetate. The protein is Malate dehydrogenase of Nocardia farcinica (strain IFM 10152).